The following is a 719-amino-acid chain: Photosystem I P700 chlorophyll a apoprotein A1 (719 aa).

The next 8 helical transmembrane spans lie at 59–82, 145–168, 184–208, 280–298, 335–358, 374–400, 422–444, and 520–538; these read VFSAHFGQLAIIFIWLSGMYFHGA, LYCTAIGALIFAALMLFAGWFHYH, LNHHLAGLLGIGSLSWAGHQVHVSL, TAHHHLAIAILFLIAGHMY, WHAQLALNLAMLGSLTIVVAHHMY, LSLFTHHMWIGGFLIVGAAAHAAIFMV, AIVSHLNWACIFLGFHSFGLYIH, and FLVHHIHAFTIHVTVLILL. 2 residues coordinate [4Fe-4S] cluster: cysteine 562 and cysteine 571. 2 helical membrane passes run 578 to 599 and 653 to 675; these read HVFLGLFWMYNAISVVIFHFSW and LSAYGLLFLGAHFVWAFSLMFLF. Chlorophyll a' is bound at residue histidine 664. Chlorophyll a is bound by residues methionine 672 and tyrosine 680. Residue tryptophan 681 coordinates phylloquinone. Residues 713 to 719 form a helical membrane-spanning segment; it reads AVGVAHY.

It belongs to the PsaA/PsaB family. As to quaternary structure, the PsaA/B heterodimer binds the P700 chlorophyll special pair and subsequent electron acceptors. PSI consists of a core antenna complex that captures photons, and an electron transfer chain that converts photonic excitation into a charge separation. The eukaryotic PSI reaction center is composed of at least 11 subunits. It depends on P700 is a chlorophyll a/chlorophyll a' dimer, A0 is one or more chlorophyll a, A1 is one or both phylloquinones and FX is a shared 4Fe-4S iron-sulfur center. as a cofactor.

The protein resides in the plastid. The protein localises to the chloroplast thylakoid membrane. It carries out the reaction reduced [plastocyanin] + hnu + oxidized [2Fe-2S]-[ferredoxin] = oxidized [plastocyanin] + reduced [2Fe-2S]-[ferredoxin]. In terms of biological role, psaA and PsaB bind P700, the primary electron donor of photosystem I (PSI), as well as the electron acceptors A0, A1 and FX. PSI is a plastocyanin-ferredoxin oxidoreductase, converting photonic excitation into a charge separation, which transfers an electron from the donor P700 chlorophyll pair to the spectroscopically characterized acceptors A0, A1, FX, FA and FB in turn. Oxidized P700 is reduced on the lumenal side of the thylakoid membrane by plastocyanin. The sequence is that of Photosystem I P700 chlorophyll a apoprotein A1 from Encephalartos lebomboensis (Lebombo cycad).